The primary structure comprises 738 residues: Photosystem I P700 chlorophyll a apoprotein A2 (738 aa).

8 helical membrane passes run 46-69 (LFST…FHIA), 135-158 (LYQG…LHLQ), 175-199 (LNHH…HVAI), 273-291 (IAHH…GHMY), 333-356 (LHFQ…QHMY), 372-398 (AALY…IFFI), 420-442 (AIIS…LYVH), and 521-539 (FLVH…LILV). Residues Cys-563 and Cys-572 each coordinate [4Fe-4S] cluster. The next 2 helical transmembrane spans lie at 579–600 (AFYL…YWHW) and 647–669 (LAVW…MFLI). Residues His-658, Met-666, and Tyr-674 each coordinate chlorophyll a. Trp-675 contributes to the phylloquinone binding site. The helical transmembrane segment at 711–731 (VVGLAHFTVGYVLTYGAFLIA) threads the bilayer.

It belongs to the PsaA/PsaB family. The PsaA/B heterodimer binds the P700 chlorophyll special pair and subsequent electron acceptors. PSI consists of a core antenna complex that captures photons, and an electron transfer chain that converts photonic excitation into a charge separation. The cyanobacterial PSI reaction center is composed of one copy each of PsaA,B,C,D,E,F,I,J,K,L,M and X, and forms trimeric complexes. PSI electron transfer chain: 5 chlorophyll a, 1 chlorophyll a', 2 phylloquinones and 3 4Fe-4S clusters. PSI core antenna: 90 chlorophyll a, 22 carotenoids, 3 phospholipids and 1 galactolipid. P700 is a chlorophyll a/chlorophyll a' dimer, A0 is one or more chlorophyll a, A1 is one or both phylloquinones and FX is a shared 4Fe-4S iron-sulfur center. serves as cofactor.

It is found in the cellular thylakoid membrane. The catalysed reaction is reduced [plastocyanin] + hnu + oxidized [2Fe-2S]-[ferredoxin] = oxidized [plastocyanin] + reduced [2Fe-2S]-[ferredoxin]. In terms of biological role, psaA and PsaB bind P700, the primary electron donor of photosystem I (PSI), as well as the electron acceptors A0, A1 and FX. PSI is a plastocyanin/cytochrome c6-ferredoxin oxidoreductase, converting photonic excitation into a charge separation, which transfers an electron from the donor P700 chlorophyll pair to the spectroscopically characterized acceptors A0, A1, FX, FA and FB in turn. Oxidized P700 is reduced on the lumenal side of the thylakoid membrane by plastocyanin or cytochrome c6. The protein is Photosystem I P700 chlorophyll a apoprotein A2 of Synechococcus sp. (strain CC9311).